Reading from the N-terminus, the 774-residue chain is Subtilisin-like protease SBT3.5 (774 aa).

An N-terminal signal peptide occupies residues 1–23 (MRNCRVLLVLVLSLVIVLNVVRA). Positions 24–108 (SDESKVHIVY…VMADSFYELA (85 aa)) are cleaved as a propeptide — removed in mature form. In terms of domain architecture, Inhibitor I9 spans 29-108 (VHIVYLGEKQ…VMADSFYELA (80 aa)). The Peptidase S8 domain occupies 112–621 (TWDYLGLSVA…GGIVNPEKAA (510 aa)). N-linked (GlcNAc...) asparagine glycosylation occurs at N128. Catalysis depends on D142, which acts as the Charge relay system. N201 is a glycosylation site (N-linked (GlcNAc...) asparagine). The active-site Charge relay system is H217. 4 N-linked (GlcNAc...) asparagine glycosylation sites follow: N232, N394, N409, and N539. The 96-residue stretch at 383–478 (SLVYPENAGF…ELGTDVLLYI (96 aa)) folds into the PA domain. The Charge relay system role is filled by S552. 4 N-linked (GlcNAc...) asparagine glycosylation sites follow: N644, N654, N725, and N755.

It belongs to the peptidase S8 family. In terms of tissue distribution, expressed in roots, leaves, stems, flower buds, developing siliques and mature seeds.

It localises to the secreted. Its subcellular location is the cell wall. Serine protease that cleaves the pectin methylesterase 17 (PME17) protein to release the PME17 mature form in the apoplasm. This chain is Subtilisin-like protease SBT3.5, found in Arabidopsis thaliana (Mouse-ear cress).